The primary structure comprises 396 residues: Argininosuccinate synthase (396 aa).

9–17 (AYSGGLDTS) is a binding site for ATP. Position 85 (tyrosine 85) interacts with L-citrulline. Glycine 115 provides a ligand contact to ATP. L-aspartate-binding residues include threonine 117, asparagine 121, and aspartate 122. Asparagine 121 is an L-citrulline binding site. L-citrulline contacts are provided by arginine 125, serine 173, glutamate 258, and tyrosine 270.

It belongs to the argininosuccinate synthase family. Type 1 subfamily. In terms of assembly, homotetramer.

Its subcellular location is the cytoplasm. The enzyme catalyses L-citrulline + L-aspartate + ATP = 2-(N(omega)-L-arginino)succinate + AMP + diphosphate + H(+). It participates in amino-acid biosynthesis; L-arginine biosynthesis; L-arginine from L-ornithine and carbamoyl phosphate: step 2/3. The polypeptide is Argininosuccinate synthase (Streptococcus mutans serotype c (strain ATCC 700610 / UA159)).